The sequence spans 462 residues: GTPase Der (462 aa).

2 consecutive EngA-type G domains span residues 2-164 (KKIA…PKKE) and 195-366 (INVA…KNYS). Residues 8–15 (GKPNVGKS), 55–59 (DTGGI), 116–119 (NKID), 201–208 (GRVNVGKS), 248–252 (DTAGI), and 312–315 (NKWD) contribute to the GTP site. Positions 367–451 (TWLPTGQLNR…PIILRPRKRG (85 aa)) constitute a KH-like domain.

The protein belongs to the TRAFAC class TrmE-Era-EngA-EngB-Septin-like GTPase superfamily. EngA (Der) GTPase family. Associates with the 50S ribosomal subunit.

Functionally, GTPase that plays an essential role in the late steps of ribosome biogenesis. The sequence is that of GTPase Der from Nitratiruptor sp. (strain SB155-2).